The following is a 526-amino-acid chain: Sterol 14-alpha demethylase CYP51A (526 aa).

A helical transmembrane segment spans residues 27–47; that stretch reads IGFAVFLVLSVVLNVLNQLLF. Residue Tyr123 coordinates lanosterol. Cys470 is a binding site for heme.

The protein belongs to the cytochrome P450 family. Requires heme as cofactor.

It is found in the endoplasmic reticulum membrane. It carries out the reaction a 14alpha-methyl steroid + 3 reduced [NADPH--hemoprotein reductase] + 3 O2 = a Delta(14) steroid + formate + 3 oxidized [NADPH--hemoprotein reductase] + 4 H2O + 4 H(+). The catalysed reaction is a 14alpha-methyl steroid + reduced [NADPH--hemoprotein reductase] + O2 = a 14alpha-hydroxymethyl steroid + oxidized [NADPH--hemoprotein reductase] + H2O + H(+). The enzyme catalyses a 14alpha-hydroxymethyl steroid + reduced [NADPH--hemoprotein reductase] + O2 = a 14alpha-formyl steroid + oxidized [NADPH--hemoprotein reductase] + 2 H2O + H(+). It catalyses the reaction a 14alpha-formyl steroid + reduced [NADPH--hemoprotein reductase] + O2 = a Delta(14) steroid + formate + oxidized [NADPH--hemoprotein reductase] + H2O + 2 H(+). It carries out the reaction lanosterol + 3 reduced [NADPH--hemoprotein reductase] + 3 O2 = 4,4-dimethyl-5alpha-cholesta-8,14,24-trien-3beta-ol + formate + 3 oxidized [NADPH--hemoprotein reductase] + 4 H2O + 4 H(+). The catalysed reaction is lanosterol + reduced [NADPH--hemoprotein reductase] + O2 = 32-hydroxylanosterol + oxidized [NADPH--hemoprotein reductase] + H2O + H(+). The enzyme catalyses 32-hydroxylanosterol + reduced [NADPH--hemoprotein reductase] + O2 = 32-oxolanosterol + oxidized [NADPH--hemoprotein reductase] + 2 H2O + H(+). It catalyses the reaction 32-oxolanosterol + reduced [NADPH--hemoprotein reductase] + O2 = 4,4-dimethyl-5alpha-cholesta-8,14,24-trien-3beta-ol + formate + oxidized [NADPH--hemoprotein reductase] + H2O + 2 H(+). It carries out the reaction eburicol + 3 reduced [NADPH--hemoprotein reductase] + 3 O2 = 14-demethyleburicol + formate + 3 oxidized [NADPH--hemoprotein reductase] + 4 H2O + 4 H(+). The catalysed reaction is eburicol + reduced [NADPH--hemoprotein reductase] + O2 = 32-hydroxyeburicol + oxidized [NADPH--hemoprotein reductase] + H2O + H(+). The enzyme catalyses 32-hydroxyeburicol + reduced [NADPH--hemoprotein reductase] + O2 = 32-oxoeburicol + oxidized [NADPH--hemoprotein reductase] + 2 H2O + H(+). It catalyses the reaction 32-oxoeburicol + reduced [NADPH--hemoprotein reductase] + O2 = 14-demethyleburicol + formate + oxidized [NADPH--hemoprotein reductase] + H2O + 2 H(+). The protein operates within steroid metabolism; ergosterol biosynthesis. Together with cyp51A and cyp51C, encodes the sterol 14alpha-demethylase that plays a critical role in the third module of ergosterol biosynthesis pathway, being ergosterol the major sterol component in fungal membranes that participates in a variety of functions. Essential for ascospore production. The third module or late pathway involves the ergosterol synthesis itself through consecutive reactions that mainly occur in the endoplasmic reticulum (ER) membrane. In filamentous fungi, during the initial step of this module, lanosterol (lanosta-8,24-dien-3beta-ol) can be metabolized to eburicol. Sterol 14alpha-demethylase catalyzes the three-step oxidative removal of the 14alpha-methyl group (C-32) of both these sterols in the form of formate, and converts eburicol and lanosterol to 14-demethyleburicol (4,4,24-trimethylergosta-8,14,24(28)-trienol) and 4,4-dimethyl-5alpha-cholesta-8,14,24-trien-3beta-ol, respectively, which are further metabolized by other enzymes in the pathway to ergosterol. Can also use substrates not intrinsic to fungi, such as 24,25-dihydrolanosterol (DHL), producing 4,4'-dimethyl-8,14-cholestadien-3-beta-ol, but at lower rates than the endogenous substrates. This chain is Sterol 14-alpha demethylase CYP51A, found in Gibberella zeae (strain ATCC MYA-4620 / CBS 123657 / FGSC 9075 / NRRL 31084 / PH-1) (Wheat head blight fungus).